A 292-amino-acid polypeptide reads, in one-letter code: Homoserine kinase (292 aa).

ATP is bound at residue 81–91 (RPRSGLGSSGA).

This sequence belongs to the GHMP kinase family. Homoserine kinase subfamily.

It is found in the cytoplasm. The enzyme catalyses L-homoserine + ATP = O-phospho-L-homoserine + ADP + H(+). Its pathway is amino-acid biosynthesis; L-threonine biosynthesis; L-threonine from L-aspartate: step 4/5. Its function is as follows. Catalyzes the ATP-dependent phosphorylation of L-homoserine to L-homoserine phosphate. The polypeptide is Homoserine kinase (Thermococcus kodakarensis (strain ATCC BAA-918 / JCM 12380 / KOD1) (Pyrococcus kodakaraensis (strain KOD1))).